A 23-amino-acid chain; its full sequence is Magainin-R1 (23 aa).

As to expression, expressed by the skin glands.

It localises to the secreted. Antimicrobial peptide. The sequence is that of Magainin-R1 from Xenopus ruwenzoriensis (Uganda clawed frog).